Here is a 297-residue protein sequence, read N- to C-terminus: Protein COFACTOR ASSEMBLY OF COMPLEX C SUBUNIT B CCB4, chloroplastic (297 aa).

The transit peptide at 1-33 (MEARIILLRIQIPWSANRQFSHPPLDFPRFIRA) directs the protein to the chloroplast. Topologically, residues 34–70 (SSSSTSQKPKTYEGPKPRKNLVADFISKNDDLVRSLP) are stromal. The chain crosses the membrane as a helical span at residues 71 to 91 (IYVGGASLLAVLFNRTVSGIA). Residues 92 to 103 (PVADASSSQSRA) are Lumenal-facing. A helical membrane pass occupies residues 104 to 124 (DLLALGLAVTNLLTGLVWLSI). Topologically, residues 125–297 (RPKSITPVNP…DSDEISRVTV (173 aa)) are stromal.

Its subcellular location is the plastid. It is found in the chloroplast thylakoid membrane. In terms of biological role, required for the biogenesis and accumulation of native cytochrome b6 in the thylakoid membrane. Controls the conversion of apocytochrome b6 to holocytochrome b6. Required for covalent binding of the c-type heme to cytochrome b6. The chain is Protein COFACTOR ASSEMBLY OF COMPLEX C SUBUNIT B CCB4, chloroplastic from Arabidopsis thaliana (Mouse-ear cress).